A 386-amino-acid polypeptide reads, in one-letter code: S-adenosylmethionine synthase (386 aa).

H14 is an ATP binding site. Residue D16 participates in Mg(2+) binding. Residue E42 coordinates K(+). Residues E55 and Q101 each contribute to the L-methionine site. Positions 101–111 (QSADIALGVDE) are flexible loop. ATP contacts are provided by residues 166–168 (DGK), 233–234 (RF), D242, 248–249 (RK), A265, and K269. D242 is an L-methionine binding site. Residue K273 coordinates L-methionine.

Belongs to the AdoMet synthase family. In terms of assembly, homotetramer; dimer of dimers. Mg(2+) serves as cofactor. The cofactor is K(+).

Its subcellular location is the cytoplasm. The enzyme catalyses L-methionine + ATP + H2O = S-adenosyl-L-methionine + phosphate + diphosphate. Its pathway is amino-acid biosynthesis; S-adenosyl-L-methionine biosynthesis; S-adenosyl-L-methionine from L-methionine: step 1/1. Functionally, catalyzes the formation of S-adenosylmethionine (AdoMet) from methionine and ATP. The overall synthetic reaction is composed of two sequential steps, AdoMet formation and the subsequent tripolyphosphate hydrolysis which occurs prior to release of AdoMet from the enzyme. The polypeptide is S-adenosylmethionine synthase (Acholeplasma laidlawii (strain PG-8A)).